Reading from the N-terminus, the 470-residue chain is Nuclear receptor ROR-beta (470 aa).

Residues 18–93 (VIPCKICGDK…LGMSRDAVKF (76 aa)) constitute a DNA-binding region (nuclear receptor). 2 NR C4-type zinc fingers span residues 21-41 (CKIC…CEGC) and 57-81 (CPRQ…LQKC). Positions 104-117 (LYAEVQKHQQRLQE) are enriched in basic and acidic residues. The segment at 104–127 (LYAEVQKHQQRLQEQRQQQSGEAE) is disordered. Residues 222 to 460 (EIDRIAQNII…TLFPPLYKEL (239 aa)) enclose the NR LBD domain. The short motif at 456–461 (LYKELF) is the AF-2 element.

This sequence belongs to the nuclear hormone receptor family. NR1 subfamily. As to quaternary structure, monomer. Interacts with CRX. Expressed in inner and outer neuroblastic layer as well as in the ganglion cell layer of the developing retina. Expressed in bone marrow osteoprogenitor cells.

The protein resides in the nucleus. Its subcellular location is the nucleoplasm. In terms of biological role, nuclear receptor that binds DNA as a monomer to ROR response elements (RORE) containing a single core motif half-site 5'-AGGTCA-3' preceded by a short A-T-rich sequence. Considered to have intrinsic transcriptional activity, have some natural ligands such as all-trans retinoic acid (ATRA) and other retinoids which act as inverse agonists repressing the transcriptional activity. Required for normal postnatal development of rod and cone photoreceptor cells. Modulates rod photoreceptors differentiation at least by inducing the transcription factor NRL-mediated pathway. In cone photoreceptor cells, regulates transcription of OPN1SW. Involved in the regulation of the period length and stability of the circadian rhythm. May control cytoarchitectural patterning of neocortical neurons during development. May act in a dose-dependent manner to regulate barrel formation upon innervation of layer IV neurons by thalamocortical axons. May play a role in the suppression of osteoblastic differentiation through the inhibition of RUNX2 transcriptional activity. Its function is as follows. Isoform 1 is critical for hindlimb motor control and for the differentiation of amacrine and horizontal cells in the retina. Regulates the expression of PTF1A synergistically with FOXN4. This chain is Nuclear receptor ROR-beta (Rorb), found in Mus musculus (Mouse).